The sequence spans 120 residues: Nascent polypeptide-associated complex protein (120 aa).

The region spanning 12-80 (GMNPAKMKQM…VKEVPKSLEI (69 aa)) is the NAC-A/B domain.

The protein belongs to the NAC-alpha family. Homodimer. Interacts with the ribosome. Binds ribosomal RNA.

Contacts the emerging nascent chain on the ribosome. The protein is Nascent polypeptide-associated complex protein of Methanosarcina mazei (strain ATCC BAA-159 / DSM 3647 / Goe1 / Go1 / JCM 11833 / OCM 88) (Methanosarcina frisia).